Reading from the N-terminus, the 403-residue chain is Alkaline protease 1 (403 aa).

An N-terminal signal peptide occupies residues 1 to 21 (MHSFKRSLLLLGALLPAVFGA). Residues 22-124 (PVEPRRAAEK…QIWYIDALTS (103 aa)) constitute a propeptide that is removed on maturation. Residues 35–119 (KYIVTFKSGL…HVEEDQIWYI (85 aa)) enclose the Inhibitor I9 domain. In terms of domain architecture, Peptidase S8 spans 129–403 (PWGLGAISHK…NLLAYNGADE (275 aa)). Residues Asp161 and His192 each act as charge relay system in the active site. The N-linked (GlcNAc...) asparagine glycan is linked to Asn252. The active-site Charge relay system is the Ser348.

This sequence belongs to the peptidase S8 family.

It is found in the secreted. The catalysed reaction is Hydrolysis of proteins with broad specificity, and of Bz-Arg-OEt &gt; Ac-Tyr-OEt. Does not hydrolyze peptide amides.. Functionally, secreted alkaline protease that allows assimilation of proteinaceous substrates. The chain is Alkaline protease 1 (alp1) from Emericella nidulans (strain FGSC A4 / ATCC 38163 / CBS 112.46 / NRRL 194 / M139) (Aspergillus nidulans).